Consider the following 51-residue polypeptide: Insulin (51 aa).

Disulfide bonds link Cys7–Cys37, Cys19–Cys50, and Cys36–Cys41.

It belongs to the insulin family. In terms of assembly, heterodimer of a B chain and an A chain linked by two disulfide bonds.

Its subcellular location is the secreted. Its function is as follows. Insulin decreases blood glucose concentration. It increases cell permeability to monosaccharides, amino acids and fatty acids. It accelerates glycolysis, the pentose phosphate cycle, and glycogen synthesis in liver. The protein is Insulin (INS) of Elephas maximus (Indian elephant).